Here is a 205-residue protein sequence, read N- to C-terminus: Molybdenum cofactor guanylyltransferase (205 aa).

GTP-binding positions include 14-16 (LAG), lysine 27, aspartate 77, and aspartate 107. A Mg(2+)-binding site is contributed by aspartate 107.

The protein belongs to the MobA family. As to quaternary structure, monomer. Requires Mg(2+) as cofactor.

It localises to the cytoplasm. It catalyses the reaction Mo-molybdopterin + GTP + H(+) = Mo-molybdopterin guanine dinucleotide + diphosphate. Transfers a GMP moiety from GTP to Mo-molybdopterin (Mo-MPT) cofactor (Moco or molybdenum cofactor) to form Mo-molybdopterin guanine dinucleotide (Mo-MGD) cofactor. The chain is Molybdenum cofactor guanylyltransferase from Burkholderia vietnamiensis (strain G4 / LMG 22486) (Burkholderia cepacia (strain R1808)).